A 549-amino-acid polypeptide reads, in one-letter code: Glucose-6-phosphate isomerase (549 aa).

K80, K228, and K234 each carry N6-acetyllysine. The active-site Proton donor is the E355. Active-site residues include H386 and K514.

Belongs to the GPI family.

The protein resides in the cytoplasm. The enzyme catalyses alpha-D-glucose 6-phosphate = beta-D-fructose 6-phosphate. It functions in the pathway carbohydrate biosynthesis; gluconeogenesis. Its pathway is carbohydrate degradation; glycolysis; D-glyceraldehyde 3-phosphate and glycerone phosphate from D-glucose: step 2/4. In terms of biological role, catalyzes the reversible isomerization of glucose-6-phosphate to fructose-6-phosphate. This Escherichia coli (strain SMS-3-5 / SECEC) protein is Glucose-6-phosphate isomerase.